The primary structure comprises 452 residues: Eukaryotic translation initiation factor 3 subunit E (452 aa).

A compositionally biased stretch (polar residues) spans 1–17 (MADNTPTTANDLLNDAT). Residues 1–23 (MADNTPTTANDLLNDATQAAAKS) form a disordered region. Residues 246–426 (PFFNHEPARD…GTVVMNHPPS (181 aa)) form the PCI domain.

The protein belongs to the eIF-3 subunit E family. In terms of assembly, component of the eukaryotic translation initiation factor 3 (eIF-3) complex.

The protein localises to the cytoplasm. In terms of biological role, component of the eukaryotic translation initiation factor 3 (eIF-3) complex, which is involved in protein synthesis of a specialized repertoire of mRNAs and, together with other initiation factors, stimulates binding of mRNA and methionyl-tRNAi to the 40S ribosome. The eIF-3 complex specifically targets and initiates translation of a subset of mRNAs involved in cell proliferation. The polypeptide is Eukaryotic translation initiation factor 3 subunit E (int6) (Botryotinia fuckeliana (strain B05.10) (Noble rot fungus)).